The primary structure comprises 272 residues: Undecaprenyl-diphosphatase (272 aa).

A run of 7 helical transmembrane segments spans residues 39 to 59 (SGLT…FVYF), 87 to 107 (WMIV…EQPI), 113 to 133 (SSPL…GLTD), 145 to 165 (ITLG…VPGV), 188 to 208 (FSFL…GLHL), 220 to 240 (PMLV…AFLL), and 251 to 271 (FVWY…VGLL).

Belongs to the UppP family.

Its subcellular location is the cell inner membrane. It catalyses the reaction di-trans,octa-cis-undecaprenyl diphosphate + H2O = di-trans,octa-cis-undecaprenyl phosphate + phosphate + H(+). Its function is as follows. Catalyzes the dephosphorylation of undecaprenyl diphosphate (UPP). Confers resistance to bacitracin. The protein is Undecaprenyl-diphosphatase of Trichlorobacter lovleyi (strain ATCC BAA-1151 / DSM 17278 / SZ) (Geobacter lovleyi).